The chain runs to 693 residues: Elongation factor G (693 aa).

Positions 8–283 constitute a tr-type G domain; the sequence is NKVRNFGIAA…AVCDYLPSPL (276 aa). GTP contacts are provided by residues 17 to 24, 81 to 85, and 135 to 138; these read AHIDAGKT, DTPGH, and NKMD.

It belongs to the TRAFAC class translation factor GTPase superfamily. Classic translation factor GTPase family. EF-G/EF-2 subfamily.

Its subcellular location is the cytoplasm. Its function is as follows. Catalyzes the GTP-dependent ribosomal translocation step during translation elongation. During this step, the ribosome changes from the pre-translocational (PRE) to the post-translocational (POST) state as the newly formed A-site-bound peptidyl-tRNA and P-site-bound deacylated tRNA move to the P and E sites, respectively. Catalyzes the coordinated movement of the two tRNA molecules, the mRNA and conformational changes in the ribosome. The polypeptide is Elongation factor G (Endomicrobium trichonymphae).